The chain runs to 265 residues: MEENEQNNREVEPQQESGEESNRGILHQAPPGNHQPHHRITNFFIDNILRPEFGRRKERINHQDELFTGRDTGALSGAESGHHRVNVPEGAGGSSKVITVTGEKKSDLAMEETLKSRGLNGDHSLSSDSDSSQASSKATQKPILWPAWVYCTRYSDRPSSGPRSRKPKKKSVSKEDKRPRTAFTAEQLQRLKAEFQTNRYLTEQRRQSLAQELGLNESQIKIWFQNKRAKIKKSTGNKNSLALHLMAQGLYNHATTSKDGKSDSE.

Composition is skewed to basic and acidic residues over residues 1–12 (MEENEQNNREVE) and 102–115 (GEKK…ETLK). Disordered stretches follow at residues 1 to 38 (MEEN…QPHH), 60 to 138 (INHQ…SSKA), and 156 to 182 (DRPS…PRTA). Positions 122 to 136 (DHSLSSDSDSSQASS) are enriched in low complexity. Residues 176–235 (DKRPRTAFTAEQLQRLKAEFQTNRYLTEQRRQSLAQELGLNESQIKIWFQNKRAKIKKST) constitute a DNA-binding region (homeobox).

It belongs to the engrailed homeobox family.

The protein resides in the nucleus. This Xenopus laevis (African clawed frog) protein is Homeobox protein engrailed-2-B (en2-b).